The primary structure comprises 101 residues: Small ribosomal subunit protein uS14 (101 aa).

The protein belongs to the universal ribosomal protein uS14 family. As to quaternary structure, part of the 30S ribosomal subunit. Contacts proteins S3 and S10.

Its function is as follows. Binds 16S rRNA, required for the assembly of 30S particles and may also be responsible for determining the conformation of the 16S rRNA at the A site. This chain is Small ribosomal subunit protein uS14, found in Burkholderia lata (strain ATCC 17760 / DSM 23089 / LMG 22485 / NCIMB 9086 / R18194 / 383).